Here is a 267-residue protein sequence, read N- to C-terminus: Small ribosomal subunit protein uS10m (267 aa).

A mitochondrion-targeting transit peptide spans 1 to 10; the sequence is MLSRILGVRN.

It belongs to the universal ribosomal protein uS10 family. As to quaternary structure, part of the mitochondrial small ribosomal subunit.

It localises to the mitochondrion. Its function is as follows. Involved in mitochondrial genome encoded proteins translation. Involved in the binding of tRNA to the ribosomes. The polypeptide is Small ribosomal subunit protein uS10m (RSM10) (Debaryomyces hansenii (strain ATCC 36239 / CBS 767 / BCRC 21394 / JCM 1990 / NBRC 0083 / IGC 2968) (Yeast)).